Reading from the N-terminus, the 239-residue chain is Pyridoxine 5'-phosphate synthase (239 aa).

Residue N7 participates in 3-amino-2-oxopropyl phosphate binding. Position 9–10 (9–10) interacts with 1-deoxy-D-xylulose 5-phosphate; that stretch reads DH. R18 is a binding site for 3-amino-2-oxopropyl phosphate. H43 acts as the Proton acceptor in catalysis. 2 residues coordinate 1-deoxy-D-xylulose 5-phosphate: R45 and H50. The active-site Proton acceptor is the E70. T100 is a 1-deoxy-D-xylulose 5-phosphate binding site. Catalysis depends on H191, which acts as the Proton donor. 3-amino-2-oxopropyl phosphate contacts are provided by residues G192 and 213–214; that span reads GH.

It belongs to the PNP synthase family. In terms of assembly, homooctamer; tetramer of dimers.

It is found in the cytoplasm. The catalysed reaction is 3-amino-2-oxopropyl phosphate + 1-deoxy-D-xylulose 5-phosphate = pyridoxine 5'-phosphate + phosphate + 2 H2O + H(+). It participates in cofactor biosynthesis; pyridoxine 5'-phosphate biosynthesis; pyridoxine 5'-phosphate from D-erythrose 4-phosphate: step 5/5. Catalyzes the complicated ring closure reaction between the two acyclic compounds 1-deoxy-D-xylulose-5-phosphate (DXP) and 3-amino-2-oxopropyl phosphate (1-amino-acetone-3-phosphate or AAP) to form pyridoxine 5'-phosphate (PNP) and inorganic phosphate. In Pelobacter propionicus (strain DSM 2379 / NBRC 103807 / OttBd1), this protein is Pyridoxine 5'-phosphate synthase.